The chain runs to 90 residues: Small ribosomal subunit protein bS20 (90 aa).

It belongs to the bacterial ribosomal protein bS20 family.

Its function is as follows. Binds directly to 16S ribosomal RNA. The polypeptide is Small ribosomal subunit protein bS20 (Rickettsia akari (strain Hartford)).